We begin with the raw amino-acid sequence, 264 residues long: Apolipoprotein A-I (264 aa).

The first 18 residues, 1–18, serve as a signal peptide directing secretion; sequence MKAVVLAVAVLFLTGSQA. 2 consecutive repeat copies span residues 67-88 and 89-110. The interval 67-264 is 10 X approximate tandem repeats; it reads LNLLENWDTL…DQITKHVTTQ (198 aa). Met-109 is modified (methionine sulfoxide). One copy of the 3; half-length repeat lies at 111–121; the sequence is KDLEKVKKKVQ. 3 repeat units span residues 122-143, 144-165, and 166-187. A 7; truncated repeat occupies 188–207; sequence TYTEEMGQILAERLGAIKES. Residue Met-193 is modified to Methionine sulfoxide. Copy 8 of the repeat occupies 208–229; that stretch reads TSLAEYQTKASEHLRTFSKKAK. Residues 230–240 form a 9; half-length repeat; that stretch reads PILEDLRQGLL. Copy 10 of the repeat occupies 241 to 264; that stretch reads PVAENFKTNIKNTFDQITKHVTTQ.

Belongs to the apolipoprotein A1/A4/E family. Homodimer. Interacts with APOA1BP and CLU. Component of a sperm activating protein complex (SPAP), consisting of APOA1, an immunoglobulin heavy chain, an immunoglobulin light chain and albumin. Interacts with NDRG1. Interacts with SCGB3A2. Interacts with NAXE and YJEFN3. Post-translationally, glycosylated. In terms of processing, palmitoylated. Phosphorylation sites are present in the extracellular medium.

The protein resides in the secreted. In terms of biological role, participates in the reverse transport of cholesterol from tissues to the liver for excretion by promoting cholesterol efflux from tissues and by acting as a cofactor for the lecithin cholesterol acyltransferase (LCAT). As part of the SPAP complex, activates spermatozoa motility. This chain is Apolipoprotein A-I (Apoa1), found in Fukomys damarensis (Damaraland mole rat).